Consider the following 351-residue polypeptide: UDP-N-acetylenolpyruvoylglucosamine reductase (351 aa).

One can recognise an FAD-binding PCMH-type domain in the interval 11–213; the sequence is GVGGSIACFI…KQVRDQVLRI (203 aa). The active site involves R158. The active-site Proton donor is S239. E343 is an active-site residue.

Belongs to the MurB family. The cofactor is FAD.

The protein resides in the cytoplasm. It catalyses the reaction UDP-N-acetyl-alpha-D-muramate + NADP(+) = UDP-N-acetyl-3-O-(1-carboxyvinyl)-alpha-D-glucosamine + NADPH + H(+). The protein operates within cell wall biogenesis; peptidoglycan biosynthesis. Its function is as follows. Cell wall formation. The polypeptide is UDP-N-acetylenolpyruvoylglucosamine reductase (Tropheryma whipplei (strain TW08/27) (Whipple's bacillus)).